The following is a 539-amino-acid chain: Glycerophosphoinositol inositolphosphodiesterase GDPD2 (539 aa).

Residues M1–C38 are Cytoplasmic-facing. The helical transmembrane segment at I39–L59 threads the bilayer. The Extracellular segment spans residues V60 to A85. The chain crosses the membrane as a helical span at residues F86–L106. At L107–K121 the chain is on the cytoplasmic side. The helical transmembrane segment at V122–W142 threads the bilayer. At Q143–Q154 the chain is on the extracellular side. Residues A155–V175 form a helical membrane-spanning segment. The Cytoplasmic portion of the chain corresponds to A176–K188. The helical transmembrane segment at I189–I209 threads the bilayer. Residues S210–Y490 are Extracellular-facing. One can recognise a GP-PDE domain in the interval P224 to R479. A divalent metal cation is bound by residues E256, D258, and H271. N442 carries an N-linked (GlcNAc...) asparagine glycan. Residues L491–L511 traverse the membrane as a helical segment. Over Q512–E539 the chain is Cytoplasmic.

The protein belongs to the glycerophosphoryl diester phosphodiesterase family. It depends on Ca(2+) as a cofactor.

It localises to the cell membrane. It is found in the cytoplasm. The protein localises to the cytoskeleton. It catalyses the reaction sn-glycero-3-phospho-1D-myo-inositol + H2O = 1D-myo-inositol 1-phosphate + glycerol + H(+). In terms of biological role, has glycerophosphoinositol inositolphosphodiesterase activity and specifically hydrolyzes glycerophosphoinositol, with no activity for other substrates such as glycerophosphoinositol 4-phosphate, glycerophosphocholine, glycerophosphoethanolamine, and glycerophosphoserine. Accelerates the program of osteoblast differentiation and growth. May play a role in remodeling of the actin cytoskeleton. The polypeptide is Glycerophosphoinositol inositolphosphodiesterase GDPD2 (GDPD2) (Homo sapiens (Human)).